A 517-amino-acid chain; its full sequence is Ribose import ATP-binding protein RbsA 1 (517 aa).

2 consecutive ABC transporter domains span residues 11–251 (LEMR…VGRD) and 263–507 (YDPG…ALAT). 43–50 (GENGAGKS) is a binding site for ATP.

It belongs to the ABC transporter superfamily. Ribose importer (TC 3.A.1.2.1) family. The complex is composed of an ATP-binding protein (RbsA), two transmembrane proteins (RbsC) and a solute-binding protein (RbsB).

The protein resides in the cell inner membrane. The catalysed reaction is D-ribose(out) + ATP + H2O = D-ribose(in) + ADP + phosphate + H(+). Functionally, part of the ABC transporter complex RbsABC involved in ribose import. Responsible for energy coupling to the transport system. The protein is Ribose import ATP-binding protein RbsA 1 of Burkholderia ambifaria (strain ATCC BAA-244 / DSM 16087 / CCUG 44356 / LMG 19182 / AMMD) (Burkholderia cepacia (strain AMMD)).